The primary structure comprises 357 residues: Histidine biosynthesis bifunctional protein HisB (357 aa).

A histidinol-phosphatase region spans residues 1–168; it reads MTPILFIDRD…GIAHALADAP (168 aa). The active-site Nucleophile is the Asp-8. Mg(2+) is bound by residues Asp-8, Asp-10, and Asp-128. Residue Asp-10 is the Proton donor of the active site. Residues 169–357 form an imidazoleglycerol-phosphate dehydratase region; it reads RTAVVQRDTK…TALPSTKGAL (189 aa).

This sequence in the N-terminal section; belongs to the histidinol-phosphatase family. It in the C-terminal section; belongs to the imidazoleglycerol-phosphate dehydratase family. Requires Mg(2+) as cofactor.

The protein localises to the cytoplasm. It carries out the reaction D-erythro-1-(imidazol-4-yl)glycerol 3-phosphate = 3-(imidazol-4-yl)-2-oxopropyl phosphate + H2O. It catalyses the reaction L-histidinol phosphate + H2O = L-histidinol + phosphate. It participates in amino-acid biosynthesis; L-histidine biosynthesis; L-histidine from 5-phospho-alpha-D-ribose 1-diphosphate: step 6/9. Its pathway is amino-acid biosynthesis; L-histidine biosynthesis; L-histidine from 5-phospho-alpha-D-ribose 1-diphosphate: step 8/9. The chain is Histidine biosynthesis bifunctional protein HisB from Stenotrophomonas maltophilia (strain K279a).